We begin with the raw amino-acid sequence, 348 residues long: Ethanol acetyltransferase 2 (348 aa).

Residues 1-19 constitute a mitochondrion transit peptide; it reads MIFNSLSIKRLSSTXTSLP. Positions 49 to 305 constitute an AB hydrolase-1 domain; it reads IIFLHGIYGY…VMKERPQEYI (257 aa). Catalysis depends on charge relay system residues Ser-121, Asp-145, and His-294.

This sequence belongs to the AB hydrolase superfamily.

Its subcellular location is the mitochondrion. The catalysed reaction is ethanol + acetyl-CoA = ethyl acetate + CoA. It carries out the reaction acetyl-CoA + H2O = acetate + CoA + H(+). It catalyses the reaction ethyl acetate + H2O = ethanol + acetate + H(+). Functionally, alcohol acetyltransferase that catalyzes the synthesis of ethyl acetate from ethanol and acetyl-CoA. Can also function as a thioesterase by hydrolyzing acetyl-CoA in the absence of ethanol, as well as esterase hydrolyzing ethyl acetate. The sequence is that of Ethanol acetyltransferase 2 (EAT2) from Hanseniaspora uvarum (Yeast).